An 89-amino-acid chain; its full sequence is Small ribosomal subunit protein uS15 (89 aa).

It belongs to the universal ribosomal protein uS15 family. Part of the 30S ribosomal subunit. Forms a bridge to the 50S subunit in the 70S ribosome, contacting the 23S rRNA.

Its function is as follows. One of the primary rRNA binding proteins, it binds directly to 16S rRNA where it helps nucleate assembly of the platform of the 30S subunit by binding and bridging several RNA helices of the 16S rRNA. Functionally, forms an intersubunit bridge (bridge B4) with the 23S rRNA of the 50S subunit in the ribosome. The chain is Small ribosomal subunit protein uS15 from Shewanella amazonensis (strain ATCC BAA-1098 / SB2B).